The primary structure comprises 396 residues: Elongation factor Tu (396 aa).

The region spanning Lys11–Lys205 is the tr-type G domain. Residues Gly20 to Thr27 are G1. Position 20–27 (Gly20–Thr27) interacts with GTP. Mg(2+) is bound at residue Thr27. A G2 region spans residues Gly61–Asn65. Positions Asp82–Gly85 are G3. Residues Asp82–His86 and Asn137–Asp140 each bind GTP. Residues Asn137–Asp140 are G4. Residues Ser175–Leu177 form a G5 region.

Belongs to the TRAFAC class translation factor GTPase superfamily. Classic translation factor GTPase family. EF-Tu/EF-1A subfamily. In terms of assembly, monomer.

The protein localises to the cytoplasm. It catalyses the reaction GTP + H2O = GDP + phosphate + H(+). GTP hydrolase that promotes the GTP-dependent binding of aminoacyl-tRNA to the A-site of ribosomes during protein biosynthesis. The polypeptide is Elongation factor Tu (Limosilactobacillus reuteri (strain DSM 20016) (Lactobacillus reuteri)).